We begin with the raw amino-acid sequence, 93 residues long: UPF0367 protein gsr3177 (93 aa).

The protein belongs to the UPF0367 family.

This is UPF0367 protein gsr3177 from Gloeobacter violaceus (strain ATCC 29082 / PCC 7421).